Reading from the N-terminus, the 395-residue chain is MKVLVINCGSSSLKYQLIDSVTEQALAVGLCERIGIDGRLTHKSADGEKVVLEDALPNHEVAIKNVIAALMNENYGVIKSLDEINAVGHRVVHGGEKFAHSVVINDEVLNAIEECNDLAPLHNPANLIGINACKSIMPNVPMVAVFDTAFHQTMPKEAYLYGIPFEYYDKYKVRRYGFHGTSHSYVSKRATTLAGLDVNNSKVIVCHLGNGASISAVKNGESVDTSMGLTPLEGLIMGTRSGDLDPAIIDFVAKKENLSLDEVMNILNKKSGVLGMSGVSSDFRDIEAAANEGNEHAKEALAVFAYRVAKYVGSYIVAMNGVDAVVFTAGLGENDKNIRAAVSSHLEFLGVSLDAEKNSQRGKELIISNPDSKVKIMVIPTNEELAICREVVELV.

Residue Asn-7 participates in Mg(2+) binding. An ATP-binding site is contributed by Lys-14. Residue Arg-90 coordinates substrate. The active-site Proton donor/acceptor is Asp-147. ATP contacts are provided by residues 207–211, 282–284, and 330–334; these read HLGNG, DFR, and GLGEN. Glu-383 lines the Mg(2+) pocket.

The protein belongs to the acetokinase family. In terms of assembly, homodimer. Requires Mg(2+) as cofactor. Mn(2+) serves as cofactor.

Its subcellular location is the cytoplasm. It carries out the reaction acetate + ATP = acetyl phosphate + ADP. Its pathway is metabolic intermediate biosynthesis; acetyl-CoA biosynthesis; acetyl-CoA from acetate: step 1/2. In terms of biological role, catalyzes the formation of acetyl phosphate from acetate and ATP. Can also catalyze the reverse reaction. This chain is Acetate kinase, found in Lachnoclostridium phytofermentans (strain ATCC 700394 / DSM 18823 / ISDg) (Clostridium phytofermentans).